The following is a 446-amino-acid chain: tRNA wybutosine-synthesizing protein 2 homolog (446 aa).

S-adenosyl-L-methionine-binding positions include Ser-208, Lys-215, Glu-255, and 283–284; that span reads DN.

It belongs to the class I-like SAM-binding methyltransferase superfamily. TRM5/TYW2 family.

It carries out the reaction 4-demethylwyosine(37) in tRNA(Phe) + S-adenosyl-L-methionine = 4-demethyl-7-[(3S)-3-amino-3-carboxypropyl]wyosine(37) in tRNA(Phe) + S-methyl-5'-thioadenosine + H(+). It functions in the pathway tRNA modification; wybutosine-tRNA(Phe) biosynthesis. In terms of biological role, S-adenosyl-L-methionine-dependent transferase that acts as a component of the wybutosine biosynthesis pathway. Wybutosine is a hyper modified guanosine with a tricyclic base found at the 3'-position adjacent to the anticodon of eukaryotic phenylalanine tRNA. Catalyzes the transfer of the alpha-amino-alpha-carboxypropyl (acp) group from S-adenosyl-L-methionine to the C-7 position of 4-demethylwyosine (imG-14) to produce wybutosine-86. The protein is tRNA wybutosine-synthesizing protein 2 homolog (Trmt12) of Mus musculus (Mouse).